Here is a 723-residue protein sequence, read N- to C-terminus: Protein Aster-A (723 aa).

Over residues 1 to 18 (MFDTTPHSGRSSPSSSPS) the composition is skewed to low complexity. A disordered region spans residues 1 to 63 (MFDTTPHSGR…SGVSGTLSTQ (63 aa)). Positions 28–38 (PSRPPSAPEPE) are enriched in pro residues. The region spanning 93 to 160 (EDFRKLFSKL…KEVTCLKKEK (68 aa)) is the GRAM domain. Residues 257 to 337 (SPSGAADRSQ…DGPTSNLGPL (81 aa)) are disordered. Phosphoserine is present on residues S265, S269, and S273. Over residues 302–314 (DSQLDASSSQTVT) the composition is skewed to polar residues. A VASt domain is found at 370–541 (SGRLLINSVF…ELAKAEKVSL (172 aa)). S418 is modified (phosphoserine). The interval 562–601 (LSWRGHRDGPQHPDPDPCTQTSMHTSGSLSSRFSEPSVDQ) is disordered. Positions 566–576 (GHRDGPQHPDP) are enriched in basic and acidic residues. The span at 579–595 (CTQTSMHTSGSLSSRFS) shows a compositional bias: polar residues. The helical transmembrane segment at 610–630 (ALVLISIVLIVLIALNALLFY) threads the bilayer.

It is found in the endoplasmic reticulum membrane. The protein localises to the cell membrane. The protein resides in the cytoplasmic vesicle. Its subcellular location is the autophagosome. In terms of biological role, cholesterol transporter that mediates non-vesicular transport of cholesterol from the plasma membrane (PM) to the endoplasmic reticulum (ER). Contains unique domains for binding cholesterol and the PM, thereby serving as a molecular bridge for the transfer of cholesterol from the PM to the ER. Plays a crucial role in cholesterol homeostasis and has the unique ability to localize to the PM based on the level of membrane cholesterol. In lipid-poor conditions localizes to the ER membrane and in response to excess cholesterol in the PM is recruited to the endoplasmic reticulum-plasma membrane contact sites (EPCS) which is mediated by the GRAM domain. At the EPCS, the sterol-binding VASt/ASTER domain binds to the cholesterol in the PM and facilitates its transfer from the PM to ER. May play a role in tumor progression. Plays a role in autophagy regulation and is required for biogenesis of the autophagosome. This function in autophagy requires its cholesterol-transfer activity. In Rattus norvegicus (Rat), this protein is Protein Aster-A.